The primary structure comprises 240 residues: Uridylate kinase (240 aa).

ATP is bound at residue 13 to 16; it reads KFSG. Residue glycine 55 coordinates UMP. Residues glycine 56 and arginine 60 each contribute to the ATP site. Residues aspartate 76 and 137–144 each bind UMP; that span reads TGNPFFTT. Residues threonine 164, tyrosine 170, and aspartate 173 each coordinate ATP.

The protein belongs to the UMP kinase family. As to quaternary structure, homohexamer.

It localises to the cytoplasm. The enzyme catalyses UMP + ATP = UDP + ADP. It participates in pyrimidine metabolism; CTP biosynthesis via de novo pathway; UDP from UMP (UMPK route): step 1/1. With respect to regulation, inhibited by UTP. Functionally, catalyzes the reversible phosphorylation of UMP to UDP. This is Uridylate kinase from Helicobacter pylori (strain J99 / ATCC 700824) (Campylobacter pylori J99).